The primary structure comprises 179 residues: Inosine/xanthosine triphosphatase (179 aa).

Position 8–13 (8–13) interacts with substrate; sequence TTNPAK. Positions 38 and 68 each coordinate Mg(2+). 68–69 lines the substrate pocket; it reads EA.

Belongs to the YjjX NTPase family. As to quaternary structure, homodimer. Mg(2+) serves as cofactor. Mn(2+) is required as a cofactor.

The enzyme catalyses XTP + H2O = XDP + phosphate + H(+). The catalysed reaction is ITP + H2O = IDP + phosphate + H(+). In terms of biological role, phosphatase that hydrolyzes non-canonical purine nucleotides such as XTP and ITP to their respective diphosphate derivatives. Probably excludes non-canonical purines from DNA/RNA precursor pool, thus preventing their incorporation into DNA/RNA and avoiding chromosomal lesions. The chain is Inosine/xanthosine triphosphatase from Proteus mirabilis (strain HI4320).